Consider the following 128-residue polypeptide: Small ribosomal subunit protein uS9 (128 aa).

Part of the 30S ribosomal subunit. Contacts proteins S7 and S10.

In terms of biological role, part of the top of the head of the 30S subunit. The C-terminal region penetrates the head emerging in the P-site where it contacts tRNA. This is Small ribosomal subunit protein uS9 (rpsI) from Thermus thermophilus (strain ATCC 27634 / DSM 579 / HB8).